Reading from the N-terminus, the 102-residue chain is Putative pterin-4-alpha-carbinolamine dehydratase (102 aa).

This sequence belongs to the pterin-4-alpha-carbinolamine dehydratase family.

The enzyme catalyses (4aS,6R)-4a-hydroxy-L-erythro-5,6,7,8-tetrahydrobiopterin = (6R)-L-erythro-6,7-dihydrobiopterin + H2O. The sequence is that of Putative pterin-4-alpha-carbinolamine dehydratase from Psychromonas ingrahamii (strain DSM 17664 / CCUG 51855 / 37).